A 136-amino-acid chain; its full sequence is Basic phospholipase A2 Tgc-K49 (136 aa).

The first 15 residues, 1 to 15, serve as a signal peptide directing secretion; that stretch reads MRTLWIVAVLLVGEG. Disulfide bonds link C41–C130, C43–C59, C58–C110, C64–C136, C65–C103, C72–C96, and C90–C101. H62 is an active-site residue. Residue D104 is part of the active site.

Belongs to the phospholipase A2 family. Group II subfamily. K49 sub-subfamily. In terms of tissue distribution, expressed by the venom gland.

It is found in the secreted. It catalyses the reaction a 1,2-diacyl-sn-glycero-3-phosphocholine + H2O = a 1-acyl-sn-glycero-3-phosphocholine + a fatty acid + H(+). In terms of biological role, PLA2 catalyzes the calcium-dependent hydrolysis of the 2-acyl groups in 3-sn-phosphoglycerides. The polypeptide is Basic phospholipase A2 Tgc-K49 (Trimeresurus gracilis (Kikuchi habu)).